The chain runs to 397 residues: E3 ubiquitin-protein ligase RNF149 (397 aa).

The first 20 residues, 1 to 20, serve as a signal peptide directing secretion; sequence MLRWLCLYSALCALTHGSSA. Residues 39-49 show a composition bias toward polar residues; that stretch reads TNSSVTGSTES. Residues 39–60 are disordered; sequence TNSSVTGSTESGRYGDSSPKES. N-linked (GlcNAc...) asparagine glycosylation is found at Asn40 and Asn140. The PA domain occupies 83–170; it reads YIVPGTSAAA…PKGMEIMEPL (88 aa). The chain crosses the membrane as a helical span at residues 196 to 216; it reads VVFVAIAFITMMIISLAWLIF. N-linked (GlcNAc...) asparagine glycosylation is present at Asn231. Residues 264 to 305 form an RING-type; atypical zinc finger; it reads CAVCIENYKTKDLVRILPCKHIFHRLCIDPWLIEHRTCPMCK. The disordered stretch occupies residues 341-397; it reads SITQEESRSEGNNLPSSSTGSSLQQSNSVKDDAGETTALLDDPGNDNAAATHTQDSH. A compositionally biased stretch (low complexity) spans 351–368; sequence GNNLPSSSTGSSLQQSNS. Polar residues predominate over residues 388-397; that stretch reads AAATHTQDSH.

The protein resides in the membrane. It catalyses the reaction S-ubiquitinyl-[E2 ubiquitin-conjugating enzyme]-L-cysteine + [acceptor protein]-L-lysine = [E2 ubiquitin-conjugating enzyme]-L-cysteine + N(6)-ubiquitinyl-[acceptor protein]-L-lysine.. It participates in protein modification; protein ubiquitination. Its function is as follows. E3 ubiquitin-protein ligase. Ubiquitinates BRAF, inducing its proteasomal degradation. The chain is E3 ubiquitin-protein ligase RNF149 (rnf149) from Xenopus laevis (African clawed frog).